Reading from the N-terminus, the 233-residue chain is Charged multivesicular body protein 4c (233 aa).

Disordered stretches follow at residues 1-24 (MSKL…SPQE) and 173-233 (QEEL…AWAT). Residues 1 to 153 (MSKLGKFFKG…EISEAFSQRV (153 aa)) are intramolecular interaction with C-terminus. Residues 125 to 183 (LNKIDDLMQEITEQQDIAQEISEAFSQRVGFGDDFDEDELMAELEELEQEELNKKMTNI) are a coiled coil. Positions 154-233 (GFGDDFDEDE…DIKQLAAWAT (80 aa)) are intramolecular interaction with N-terminus. The segment covering 204 to 216 (SSTARRSRAASSQ) has biased composition (low complexity). Serine 210 bears the Phosphoserine; by AURKB mark.

The protein belongs to the SNF7 family. Probable core component of the endosomal sorting required for transport complex III (ESCRT-III). ESCRT-III components are thought to multimerize to form a flat lattice on the perimeter membrane of the endosome. Several assembly forms of ESCRT-III may exist that interact and act sequentially. Self-associates. Interacts with CHMP2A. Interacts with CHMP4A. Interacts with CHMP4B. Interacts with CHMP6. Interacts with VPS4A. Interacts with PDCD6IP; the interaction is direct. Post-translationally, phosphorylated at Ser-210 by AURKB during cytokinesis: together with ZFYVE19/ANCHR, phosphorylated CHMP4C retains abscission-competent VPS4 (VPS4A and/or VPS4B) at the midbody ring until abscission checkpoint signaling is terminated at late cytokinesis. In terms of tissue distribution, expressed in heart, spleen and kidney.

The protein resides in the cytoplasm. It is found in the cytosol. It localises to the late endosome membrane. Its subcellular location is the midbody. The protein localises to the midbody ring. Functionally, probable core component of the endosomal sorting required for transport complex III (ESCRT-III) which is involved in multivesicular bodies (MVBs) formation and sorting of endosomal cargo proteins into MVBs. MVBs contain intraluminal vesicles (ILVs) that are generated by invagination and scission from the limiting membrane of the endosome and mostly are delivered to lysosomes enabling degradation of membrane proteins, such as stimulated growth factor receptors, lysosomal enzymes and lipids. The MVB pathway appears to require the sequential function of ESCRT-O, -I,-II and -III complexes. ESCRT-III proteins mostly dissociate from the invaginating membrane before the ILV is released. The ESCRT machinery also functions in topologically equivalent membrane fission events, such as the terminal stages of cytokinesis and the budding of enveloped viruses (HIV-1 and other lentiviruses). Key component of the cytokinesis checkpoint, a process required to delay abscission to prevent both premature resolution of intercellular chromosome bridges and accumulation of DNA damage: upon phosphorylation by AURKB, together with ZFYVE19/ANCHR, retains abscission-competent VPS4 (VPS4A and/or VPS4B) at the midbody ring until abscission checkpoint signaling is terminated at late cytokinesis. Deactivation of AURKB results in dephosphorylation of CHMP4C followed by its dissociation from ANCHR and VPS4 and subsequent abscission. ESCRT-III proteins are believed to mediate the necessary vesicle extrusion and/or membrane fission activities, possibly in conjunction with the AAA ATPase VPS4. Involved in HIV-1 p6- and p9-dependent virus release. CHMP4A/B/C are required for the exosomal release of SDCBP, CD63 and syndecan. The polypeptide is Charged multivesicular body protein 4c (CHMP4C) (Homo sapiens (Human)).